A 626-amino-acid chain; its full sequence is Chaperone protein HtpG (626 aa).

An a; substrate-binding region spans residues 1–331 (MSETVERHEF…TDDLPLNVSR (331 aa)). The interval 332–544 (EMLQSTPTLQ…GMGPDLQMQR (213 aa)) is b. Residues 545 to 626 (LLRRAGRGFG…GTVAKPAESA (82 aa)) form a c region.

Belongs to the heat shock protein 90 family. As to quaternary structure, homodimer.

The protein localises to the cytoplasm. Its function is as follows. Molecular chaperone. Has ATPase activity. The chain is Chaperone protein HtpG from Methylorubrum populi (strain ATCC BAA-705 / NCIMB 13946 / BJ001) (Methylobacterium populi).